Here is a 95-residue protein sequence, read N- to C-terminus: DNA-directed RNA polymerase subunit Rpo11 (95 aa).

Belongs to the archaeal Rpo11/eukaryotic RPB11/RPC19 RNA polymerase subunit family. In terms of assembly, part of the RNA polymerase complex.

Its subcellular location is the cytoplasm. The catalysed reaction is RNA(n) + a ribonucleoside 5'-triphosphate = RNA(n+1) + diphosphate. Functionally, DNA-dependent RNA polymerase (RNAP) catalyzes the transcription of DNA into RNA using the four ribonucleoside triphosphates as substrates. The sequence is that of DNA-directed RNA polymerase subunit Rpo11 from Methanococcus vannielii (strain ATCC 35089 / DSM 1224 / JCM 13029 / OCM 148 / SB).